The following is a 491-amino-acid chain: Protein phosphatase ppm-1.G (491 aa).

The PPM-type phosphatase domain maps to 23–486; sequence SYACTTMQGW…DNMTVICTTF (464 aa). Mn(2+)-binding residues include aspartate 57 and glycine 58. Over residues 112 to 125 the composition is skewed to basic and acidic residues; it reads KDIGDEGKPKKAGG. 2 disordered regions span residues 112-136 and 170-294; these read KDIG…ADRI and GDVS…EEMV. Composition is skewed to acidic residues over residues 173–192 and 260–294; these read SDDS…QDDT and ATEE…EEMV. Mn(2+) is bound by residues aspartate 428 and aspartate 477.

Belongs to the PP2C family. Mg(2+) is required as a cofactor. Mn(2+) serves as cofactor.

The enzyme catalyses O-phospho-L-seryl-[protein] + H2O = L-seryl-[protein] + phosphate. It catalyses the reaction O-phospho-L-threonyl-[protein] + H2O = L-threonyl-[protein] + phosphate. The sequence is that of Protein phosphatase ppm-1.G from Caenorhabditis elegans.